We begin with the raw amino-acid sequence, 972 residues long: N-alpha-acetyltransferase 25, NatB auxiliary subunit (972 aa).

4 TPR repeats span residues 11-44 (NDRR…HKDL), 45-78 (HCAK…EPTD), 79-112 (DNSL…VPNS), and 114-146 (EYHS…VPKN).

This sequence belongs to the MDM20/NAA25 family. As to quaternary structure, component of the N-terminal acetyltransferase B (NatB) complex which is composed of NAA20 and NAA25.

Its subcellular location is the cytoplasm. In terms of biological role, non-catalytic subunit of the NatB complex which catalyzes acetylation of the N-terminal methionine residues of peptides beginning with Met-Asp, Met-Glu, Met-Asn and Met-Gln. May play a role in normal cell-cycle progression. The chain is N-alpha-acetyltransferase 25, NatB auxiliary subunit (NAA25) from Homo sapiens (Human).